An 80-amino-acid polypeptide reads, in one-letter code: UPF0248 protein M1425_2629 (80 aa).

The protein belongs to the UPF0248 family.

The chain is UPF0248 protein M1425_2629 from Saccharolobus islandicus (strain M.14.25 / Kamchatka #1) (Sulfolobus islandicus).